Reading from the N-terminus, the 938-residue chain is MNWNKGGPGTKRGFGFGGFAISAGKKEEPKLPQQSHSAFGATSSSSGFGKSAPPQLPSFYKIGSKRANFDEENAYFEDEEEDSSNVDLPYIPAENSPTRQQFHSKPVDSDSDDDPLEAFMAEVEDQAARDMKRLEEKDKERKNVKGIRDDIEEEDDQEAYFRYMAENPTAGVVQEEEEDNLEYDSDGNPIAPTKKIIDPLPPIDHSEIDYPPFEKNFYNEHEEITNLTPQQLIDLRHKLNLRVSGAAPPRPGSSFAHFGFDEQLMHQIRKSEYTQPTPIQCQGVPVALSGRDMIGIAKTGSGKTAAFIWPMLIHIMDQKELEPGDGPIAVIVCPTRELCQQIHAECKRFGKAYNLRSVAVYGGGSMWEQAKALQEGAEIVVCTPGRLIDHVKKKATNLQRVSYLVFDEADRMFDMGFEYQVRSIASHVRPDRQTLLFSATFRKKIEKLARDILIDPIRVVQGDIGEANEDVTQIVEILHSGPSKWNWLTRRLVEFTSSGSVLLFVTKKANAEELANNLKQEGHNLGLLHGDMDQSERNKVISDFKKKDIPVLVATDVAARGLDIPSIKTVINYDVARDIDTHTHRIGRTGRAGEKGVAYTLLTPKDSNFAGDLVRNLEGANQHVSKELLDLAMQNAWFRKSRFKGGKGKKLNIGGGGLGYRERPGLGSENMDRGNNNVMSNYEAYKPSTGAMGDRLTAMKAAFQSQYKSHFVAASLSNQKAGSSAAGASGWTSAGSLNSVPTNSAQQGHNSPDSPVTSAAKGIPGFGNTGNISGAPVTYPSAGAQGVNNTASGNNSREGTGGSNGKRERYTENRGSSRHSHGETGNRHSDSPRHGDGGRHGDGYRHPESSSRHTDGHRHGENRHGGSAGRHGENRGANDGRNGESRKEAFNRESKMEPKMEPKVDSSKMDKVDSKTDKTADGFAVPEPPKRKKSRWDS.

Positions 1–18 (MNWNKGGPGTKRGFGFGG) are enriched in gly residues. The interval 1–114 (MNWNKGGPGT…KPVDSDSDDD (114 aa)) is disordered. An N6-acetyllysine modification is found at Lys5. Arg12 bears the Omega-N-methylarginine mark. Low complexity predominate over residues 35-52 (SHSAFGATSSSSGFGKSA). Ser58 carries the post-translational modification Phosphoserine. Positions 70–84 (DEENAYFEDEEEDSS) are enriched in acidic residues. Phosphoserine occurs at positions 96, 104, 109, and 111. Residues 116 to 157 (LEAFMAEVEDQAARDMKRLEEKDKERKNVKGIRDDIEEEDDQ) are a coiled coil. A disordered region spans residues 182 to 203 (EYDSDGNPIAPTKKIIDPLPPI). Residue Ser185 is modified to Phosphoserine. The Q motif motif lies at 253–281 (SSFAHFGFDEQLMHQIRKSEYTQPTPIQC). The Helicase ATP-binding domain maps to 284–459 (VPVALSGRDM…RDILIDPIRV (176 aa)). 297-304 (AKTGSGKT) contributes to the ATP binding site. Residues 407 to 410 (DEAD) carry the DEAD box motif. Positions 487-632 (WLTRRLVEFT…HVSKELLDLA (146 aa)) constitute a Helicase C-terminal domain. Composition is skewed to polar residues over residues 737–757 (LNSV…SPVT) and 786–798 (GVNN…NSRE). The tract at residues 737–938 (LNSVPTNSAQ…PKRKKSRWDS (202 aa)) is disordered. The segment at 738–833 (NSVPTNSAQQ…TGNRHSDSPR (96 aa)) is necessary for interaction with TP53BP2. At Ser754 the chain carries Phosphoserine. A compositionally biased stretch (basic and acidic residues) spans 820–920 (SHGETGNRHS…KVDSKTDKTA (101 aa)). Residue Lys899 forms a Glycyl lysine isopeptide (Lys-Gly) (interchain with G-Cter in SUMO2) linkage.

This sequence belongs to the DEAD box helicase family. DDX42 subfamily. As to quaternary structure, transient component of the SF3B subcomplex of the 17S U2 SnRNP complex. Interacts (via the C-terminus) with TP53BP2; the interaction is not inhibitied by TP53BP2 ubiquitination and is independent of p53/TP53. In terms of tissue distribution, expressed in several cell lines (at protein level). Expressed in liver, lung, tonsil, thymus, muscle and pancreatic islets.

Its subcellular location is the cytoplasm. It localises to the nucleus. The protein localises to the cajal body. It is found in the nucleus speckle. The catalysed reaction is ATP + H2O = ADP + phosphate + H(+). ATP-dependent RNA helicase that binds to partially double-stranded RNAs (dsRNAs) in order to unwind RNA secondary structures. Unwinding is promoted in the presence of single-strand binding proteins. Also mediates RNA duplex formation thereby displacing the single-strand RNA binding protein. ATP and ADP modulate its activity: ATP binding and hydrolysis by DDX42 triggers RNA strand separation, whereas the ADP-bound form of the protein triggers annealing of complementary RNA strands. Required for assembly of the 17S U2 SnRNP complex of the spliceosome, a large ribonucleoprotein complex that removes introns from transcribed pre-mRNAs: DDX42 associates transiently with the SF3B subcomplex of the 17S U2 SnRNP complex and is released after fulfilling its role in the assembly of 17S U2 SnRNP. Involved in the survival of cells by interacting with TP53BP2 and thereby counteracting the apoptosis-stimulating activity of TP53BP2. Relocalizes TP53BP2 to the cytoplasm. This is ATP-dependent RNA helicase DDX42 from Homo sapiens (Human).